We begin with the raw amino-acid sequence, 380 residues long: Putative 8-amino-7-oxononanoate synthase (380 aa).

Residue R18 coordinates substrate. 106–107 (GY) is a pyridoxal 5'-phosphate binding site. H131 serves as a coordination point for substrate. Pyridoxal 5'-phosphate is bound by residues S179, 205–208 (DEAH), and 236–239 (TFGK). Residue K239 is modified to N6-(pyridoxal phosphate)lysine. T352 lines the substrate pocket.

The protein belongs to the class-II pyridoxal-phosphate-dependent aminotransferase family. BioF subfamily. In terms of assembly, homodimer. It depends on pyridoxal 5'-phosphate as a cofactor.

It carries out the reaction 6-carboxyhexanoyl-[ACP] + L-alanine + H(+) = (8S)-8-amino-7-oxononanoate + holo-[ACP] + CO2. Its pathway is cofactor biosynthesis; biotin biosynthesis. Its function is as follows. Catalyzes the decarboxylative condensation of pimeloyl-[acyl-carrier protein] and L-alanine to produce 8-amino-7-oxononanoate (AON), [acyl-carrier protein], and carbon dioxide. The polypeptide is Putative 8-amino-7-oxononanoate synthase (bioF) (Neisseria meningitidis serogroup C (strain 053442)).